The sequence spans 375 residues: Alcohol dehydrogenase 1 (375 aa).

At serine 2 the chain carries N-acetylserine. Zn(2+) contacts are provided by cysteine 47, histidine 68, cysteine 98, cysteine 101, cysteine 104, cysteine 112, and cysteine 175. Residues 200–205 (WSGRVG), aspartate 224, and lysine 229 each bind NAD(+). Lysine 234 carries the post-translational modification N6-succinyllysine. Residue 293–295 (VGV) coordinates NAD(+). Lysine 340 is modified (N6-succinyllysine). Residue arginine 370 participates in NAD(+) binding.

Belongs to the zinc-containing alcohol dehydrogenase family. Class-I subfamily. Homodimer. Zn(2+) is required as a cofactor.

The protein resides in the cytoplasm. It catalyses the reaction a primary alcohol + NAD(+) = an aldehyde + NADH + H(+). The enzyme catalyses a secondary alcohol + NAD(+) = a ketone + NADH + H(+). The polypeptide is Alcohol dehydrogenase 1 (ADH1) (Geomys bursarius (Plains pocket gopher)).